The primary structure comprises 145 residues: Peptidyl-lysine N-acetyltransferase YjaB (145 aa).

One can recognise an N-acetyltransferase domain in the interval 3-144; it reads INIRRSRHEE…KPYPLLNLIY (142 aa).

Belongs to the acetyltransferase family.

The enzyme catalyses L-lysyl-[protein] + acetyl-CoA = N(6)-acetyl-L-lysyl-[protein] + CoA + H(+). Its function is as follows. N-epsilon-lysine acetyltransferase that catalyzes acetylation of a large number of proteins. This Salmonella typhimurium (strain LT2 / SGSC1412 / ATCC 700720) protein is Peptidyl-lysine N-acetyltransferase YjaB (yjaB).